A 73-amino-acid chain; its full sequence is uncharacterized protein (73 aa).

This is an uncharacterized protein from Schizosaccharomyces pombe (strain 972 / ATCC 24843) (Fission yeast).